The sequence spans 50 residues: Large ribosomal subunit protein bL32A (50 aa).

The segment covering 1 to 19 has biased composition (basic residues); sequence MAVPKRRKSRSNTRHRRSQ. The segment at 1–21 is disordered; it reads MAVPKRRKSRSNTRHRRSQWK.

It belongs to the bacterial ribosomal protein bL32 family.

The chain is Large ribosomal subunit protein bL32A from Saccharopolyspora erythraea (strain ATCC 11635 / DSM 40517 / JCM 4748 / NBRC 13426 / NCIMB 8594 / NRRL 2338).